A 331-amino-acid chain; its full sequence is Anthranilate phosphoribosyltransferase (331 aa).

5-phospho-alpha-D-ribose 1-diphosphate is bound by residues Gly79, 82–83, Thr87, 89–92, 107–115, and Ala119; these read GD, NIST, and KHGNYGATS. An anthranilate-binding site is contributed by Gly79. Mg(2+) is bound at residue Ser91. Asn110 is an anthranilate binding site. Anthranilate is bound at residue Arg165. Mg(2+)-binding residues include Asp223 and Glu224.

It belongs to the anthranilate phosphoribosyltransferase family. In terms of assembly, homodimer. Mg(2+) is required as a cofactor.

It catalyses the reaction N-(5-phospho-beta-D-ribosyl)anthranilate + diphosphate = 5-phospho-alpha-D-ribose 1-diphosphate + anthranilate. Its pathway is amino-acid biosynthesis; L-tryptophan biosynthesis; L-tryptophan from chorismate: step 2/5. Catalyzes the transfer of the phosphoribosyl group of 5-phosphorylribose-1-pyrophosphate (PRPP) to anthranilate to yield N-(5'-phosphoribosyl)-anthranilate (PRA). The polypeptide is Anthranilate phosphoribosyltransferase (Bacteroides fragilis (strain YCH46)).